Here is a 172-residue protein sequence, read N- to C-terminus: Putative defense protein (172 aa).

The N-terminal stretch at 1–21 (MKLVVAAVLAMAASRWRRLSA) is a signal peptide. The Reelin domain maps to 22 to 172 (HGQVPSSTCA…LRQLDNAVAA (151 aa)).

It belongs to the insect defense protein family. In adults, in hemolymph.

The protein localises to the secreted. Functionally, may have antimicrobial activity. The polypeptide is Putative defense protein (Locusta migratoria (Migratory locust)).